Consider the following 245-residue polypeptide: Dehydrogenase/reductase SDR family member 6 (245 aa).

Residues 16–18 (QGI), Asp-37, and Asp-58 each bind NAD(+). Substrate is bound at residue Arg-144. Residue Tyr-147 is the Proton acceptor of the active site. Residues Lys-151 and 180–184 (VDTPS) contribute to the NAD(+) site. Residues Arg-188 and Arg-205 each contribute to the substrate site.

This sequence belongs to the short-chain dehydrogenases/reductases (SDR) family. As to quaternary structure, homotetramer.

The protein resides in the cytoplasm. The catalysed reaction is cis-4-hydroxy-L-proline + NAD(+) = 4-oxo-L-proline + NADH + H(+). It carries out the reaction (R)-3-hydroxybutanoate + NAD(+) = acetoacetate + NADH + H(+). It participates in amino-acid metabolism. Its pathway is siderophore biosynthesis. Functionally, NAD(H)-dependent dehydrogenase/reductase with a preference for cyclic substrates. Catalyzes stereoselective conversion of 4-oxo-L-proline to cis-4-hydroxy-L-proline, likely a detoxification mechanism for ketoprolines. Mediates the formation of 2,5-dihydroxybenzoate (2,5-DHBA), a siderophore that chelates free cytoplasmic iron, thereby regulating iron transport and homeostasis while protecting cells against free radical-induced oxidative stress. The iron-siderophore complex is imported into mitochondria, providing an iron source for mitochondrial metabolic processes in particular heme synthesis. May act as a 3-hydroxybutyrate dehydrogenase. The polypeptide is Dehydrogenase/reductase SDR family member 6 (bdh2) (Xenopus laevis (African clawed frog)).